The sequence spans 212 residues: ER lumen protein-retaining receptor 2 (212 aa).

Residues 1–4 (MNIF) are Lumenal-facing. The helical transmembrane segment at 5 to 24 (RLTGDLSHLAAIIILLLKIW) threads the bilayer. Residues 25-32 (KSRSCAGI) lie on the Cytoplasmic side of the membrane. A helical transmembrane segment spans residues 33–52 (SGKSQLLFALVFTTRYLDLF). Residues 47–48 (RY) are interaction with the K-D-E-L motif on target proteins. The Lumenal portion of the chain corresponds to 53–58 (TSFISL). A helical transmembrane segment spans residues 59–79 (YNTSMKLIYIACSYATVYLIY). Over 80–92 (MKFKATYDGNHDT) the chain is Cytoplasmic. The helical transmembrane segment at 93-110 (FRVEFLIVPVGGLSFLVN) threads the bilayer. The Lumenal segment spans residues 111-116 (HDFSPL). Residues 117-135 (EILWTFSIYLESVAILPQL) form a helical membrane-spanning segment. At 136–149 (FMISKTGEAETITT) the chain is on the cytoplasmic side. A helical transmembrane segment spans residues 150–168 (HYLFFLGLYRALYLVNWIW). Residues 159–169 (RALYLVNWIWR) are interaction with the K-D-E-L motif on target proteins. The Lumenal segment spans residues 169 to 178 (RYYFEGFFDL). A helical membrane pass occupies residues 179 to 199 (IAVVAGVVQTVLYCDFFYLYV). Topologically, residues 200–212 (TKVLKGKKLSLPA) are cytoplasmic. The important for recycling of cargo proteins with the sequence motif K-D-E-L from the Golgi to the endoplasmic reticulum stretch occupies residues 204-207 (KGKK).

This sequence belongs to the ERD2 family.

The protein resides in the endoplasmic reticulum membrane. It localises to the golgi apparatus membrane. It is found in the cytoplasmic vesicle. The protein localises to the COPI-coated vesicle membrane. Functionally, membrane receptor that binds the K-D-E-L sequence motif in the C-terminal part of endoplasmic reticulum resident proteins and maintains their localization in that compartment by participating to their vesicle-mediated recycling back from the Golgi. Binding is pH dependent, and is optimal at pH 5-5.4. The sequence is that of ER lumen protein-retaining receptor 2 (KDELR2) from Gallus gallus (Chicken).